The chain runs to 47 residues: Packaging protein P22 (47 aa).

Residues 22 to 42 (TGWLAFVGLIIVAIILWQQII) traverse the membrane as a helical segment.

In terms of assembly, heterodimer of P20 and P22; further multimerizes as hexamers of heterodimers. Part of the dodecameric portal complex that is composed of the packaging efficiency factor P6, the DNA packaging ATPase P9, and the internal heterododecamer P20/P22 which spans the virion inner membrane.

The protein localises to the virion membrane. Functionally, together with P22, forms the internal part of the portal complex embeded in the virion internal membrane and which plays critical roles in genome packaging and genome ejection. Both proteins multimerize as a single ring-shaped heterdodecamer arranged around a central channel and interact with the P6/P9 external part of the portal. In Enterobacteria phage PRD1 (Bacteriophage PRD1), this protein is Packaging protein P22 (XXII).